The following is a 321-amino-acid chain: Glucokinase (321 aa).

Gly8 to Thr13 serves as a coordination point for ATP.

Belongs to the bacterial glucokinase family.

The protein resides in the cytoplasm. It carries out the reaction D-glucose + ATP = D-glucose 6-phosphate + ADP + H(+). In Salmonella agona (strain SL483), this protein is Glucokinase.